A 591-amino-acid polypeptide reads, in one-letter code: MKKISLPKIGIRPVIDGRRMGVRESLEEQTMNMAKATAALLTEKLRHACGAAVECVISDTCIAGMAEAAACEEKFSSQNVGLTITVTPCWCYGSETIDMDPTRPKAIWGFNGTERPGAVYLAAALAAHSQKGIPAFSIYGHDVQDADDTSIPADVEEKLLRFARAGLAVASMKGKSYLSLGGVSMGIAGSIVDHNFFESWLGMKVQAVDMTELRRRIDQKIYDEAELEMALAWADKNFRYGEDENNKQYQRNAEQSRAVLRESLLMAMCIRDMMQGNSKLADIGRVEESLGYNAIAAGFQGQRHWTDQYPNGDTAEAILNSSFDWNGVREPFVVATENDSLNGVAMLMGHQLTGTAQVFADVRTYWSPEAIERVTGHKLDGLAEHGIIHLINSGSAALDGSCKQRDSEGNPTMKPHWEISQKEADACLAATEWCPAIHEYFRGGGYSSRFLTEGGVPFTMTRVNIIKGLGPVLQIAEGWSVELPKDVHDILNKRTNSTWPTTWFAPRLTGKGPFTDVYSIMANWGANHGVLTIGHVGADFITLASMLRIPVCMHNVEETKVYRPSAWAAHGMDIEGQDYRACQNYGPLYKR.

Catalysis depends on proton acceptor residues Glu-337 and Asp-361. Residues Glu-337, Asp-361, and His-528 each contribute to the Mn(2+) site.

Belongs to the L-fucose isomerase family. Homohexamer. It depends on Mn(2+) as a cofactor.

It localises to the cytoplasm. It catalyses the reaction L-fucose = L-fuculose. Its pathway is carbohydrate degradation; L-fucose degradation; L-lactaldehyde and glycerone phosphate from L-fucose: step 1/3. Functionally, converts the aldose L-fucose into the corresponding ketose L-fuculose. This Escherichia coli (strain SE11) protein is L-fucose isomerase.